The sequence spans 319 residues: Transcription elongation factor A protein 1 (319 aa).

The TFIIS N-terminal domain maps to 1–78 (MQEIIKCREQ…DKWKQDIEGT (78 aa)). The segment covering 78–106 (TSATTTSSSSSSSSSTTSTTTTKTASPSE) has biased composition (low complexity). The interval 78-146 (TSATTTSSSS…TTPKTSSPPI (69 aa)) is disordered. Positions 107–122 (SLKRKSISEDTSDRPT) are enriched in basic and acidic residues. The span at 133-146 (ISPPTTPKTSSPPI) shows a compositional bias: low complexity. The TFIIS central domain maps to 160–272 (LRNKTIQLFV…ASMLGQNNEA (113 aa)). Residues 275 to 317 (DQFQCGKCKQRKCTYTQLQTRSADEPPTTFVKCCVKGCGNRWR) form a TFIIS-type zinc finger. The Zn(2+) site is built by Cys279, Cys282, Cys307, and Cys312.

Belongs to the TFS-II family.

The protein localises to the nucleus. Functionally, necessary for efficient RNA polymerase II transcription elongation past template-encoded arresting sites. The arresting sites in DNA have the property of trapping a certain fraction of elongating RNA polymerases that pass through, resulting in locked ternary complexes. Cleavage of the nascent transcript by S-II allows the resumption of elongation from the new 3'-terminus. This is Transcription elongation factor A protein 1 (tcea1) from Dictyostelium discoideum (Social amoeba).